The following is a 1050-amino-acid chain: MKPFNIFDSNSSIQGKFFLEASAGTGKTFTIEQIVLRALIEGSLTHVEHALAITFTNASTNELKVRIKDNLAQTLRELKAVLNSQPASLPTYLDINCNVKQIYMQVRNALATLDQMSLFTIHGFCNFVLEQYFPKTRLIHKNPALTHSQLVLHHITNYLKQDLWKNVLFQEQFHLLAVRYNVTSKHTSSLVDKLLASYTQPISSYFSSRVERLEQISLWHQQIYNSLLEIPKQVFLDQLTAHISGFKKQPFSILDDLHHFVDLLYTSETHSSLFSFFKIAETFNFKHRLARYKPCAAFTVLENMSWVERTLEFCNLDRIFNTLLVDLQEYLKQNYTPWLSPDESVFALEKLLSSSEAQPVVQALREQYQLVLIDEFQDTDKQQWSIFSNLFISPKFTGSLFLIGDPKQSIYEWRSADLPTYLTAKSSFSEDKQLQLVNNYRSTPKLMEAINQIFGKISPFLEIPGYLPIEYHALNPQSSETFENPPHAPIHFFFYETIKDQALWIFSEALRLQKEQKIPLGNMVVLVSDSNQAFELISYATIPVSFSKNKSIFHLTETHILTTALLEAILHPENYEKISKILFSSLFGLSLDEVTTKKEDFTIYFQSLHSYISHHGLLATFYRVMTTQGNVLFSSPRGDLIFQEMEKLCGYLDTISSYPYHQLLHLKNFSETGRWEEELAISSYSEDLETLKITTIHSSKGLEYDIVFCPGIEKSKKNKSSSELLREMYVACTRAKKQLYLPISTQPPSLQRSSALTNYVKLEGTQSSAYDLAIHLHQEHPDLFSYSLPKDHGHATTVLNLPLLETFALKVTPPKTIFSFSSTKFLLDTHKDSQSIPYSKLPISKQQLPLGEKTGILIHKILESIQFSLLQDTEYLMSTIMRFIKHTHLEGFEETILKLLSKTFFSPLTFSSQTFSLSQVLPNKIFRETSFLFLENQELWQGVIDLFFEHEGKYYIIDWKTSFLGETNSDYSKSNLSIYIKQEKLDYQGRIYVKAVRKFLNQFEIDDDVELGVIFIRGIDTQGNGFFALNSSEDIPNFNPKAIQKCQAYH.

The 443-residue stretch at 1-443 folds into the UvrD-like helicase ATP-binding domain; sequence MKPFNIFDSN…LQLVNNYRST (443 aa). The DNA-binding and helicase activity, interacts with RecC stretch occupies residues 1–766; sequence MKPFNIFDSN…TNYVKLEGTQ (766 aa). Residue 21–28 participates in ATP binding; the sequence is ASAGTGKT. Positions 458–701 constitute a UvrD-like helicase C-terminal domain; that stretch reads SPFLEIPGYL…KITTIHSSKG (244 aa). Residues 814 to 1050 form a nuclease activity, interacts with RecD and RecA region; it reads PKTIFSFSST…KAIQKCQAYH (237 aa). Positions 859, 945, and 958 each coordinate Mg(2+). Aspartate 958 serves as the catalytic For nuclease activity.

It belongs to the helicase family. UvrD subfamily. Heterotrimer of RecB, RecC and RecD. All subunits contribute to DNA-binding. Interacts with RecA. The cofactor is Mg(2+).

It catalyses the reaction Exonucleolytic cleavage (in the presence of ATP) in either 5'- to 3'- or 3'- to 5'-direction to yield 5'-phosphooligonucleotides.. The enzyme catalyses Couples ATP hydrolysis with the unwinding of duplex DNA by translocating in the 3'-5' direction.. It carries out the reaction ATP + H2O = ADP + phosphate + H(+). A helicase/nuclease that prepares dsDNA breaks (DSB) for recombinational DNA repair. Binds to DSBs and unwinds DNA via a highly rapid and processive ATP-dependent bidirectional helicase activity. Unwinds dsDNA until it encounters a Chi (crossover hotspot instigator) sequence from the 3' direction. Cuts ssDNA a few nucleotides 3' to the Chi site. The properties and activities of the enzyme are changed at Chi. The Chi-altered holoenzyme produces a long 3'-ssDNA overhang and facilitates RecA-binding to the ssDNA for homologous DNA recombination and repair. Holoenzyme degrades any linearized DNA that is unable to undergo homologous recombination. In the holoenzyme this subunit contributes ATPase, 3'-5' helicase, exonuclease activity and loads RecA onto ssDNA. The chain is RecBCD enzyme subunit RecB from Chlamydia pneumoniae (Chlamydophila pneumoniae).